The sequence spans 235 residues: RNA pyrophosphohydrolase (235 aa).

The 144-residue stretch at 6–149 (GFRPNVGIIL…KREVYQLALS (144 aa)) folds into the Nudix hydrolase domain. The Nudix box signature appears at 38 to 59 (GGIKYGETPEQAMFRELHEEVG). Residues 161–235 (APLSPYGRGG…PDDTAPKDNS (75 aa)) form a disordered region. The span at 171 to 196 (QHRERDGRDARDSRERSSDQGGRNEQ) shows a compositional bias: basic and acidic residues. Over residues 203–220 (TVTTTTVIVETVSVSAPT) the composition is skewed to low complexity.

The protein belongs to the Nudix hydrolase family. RppH subfamily. It depends on a divalent metal cation as a cofactor.

Accelerates the degradation of transcripts by removing pyrophosphate from the 5'-end of triphosphorylated RNA, leading to a more labile monophosphorylated state that can stimulate subsequent ribonuclease cleavage. This is RNA pyrophosphohydrolase from Ralstonia pickettii (strain 12J).